The primary structure comprises 491 residues: Cytochrome P450 2B2 (491 aa).

Phosphoserine; by PKA is present on Ser-128. Residue Cys-436 coordinates heme.

Belongs to the cytochrome P450 family. It depends on heme as a cofactor. In terms of processing, phosphorylation is accompanied by a decrease in enzyme activity.

Its subcellular location is the endoplasmic reticulum membrane. The protein resides in the microsome membrane. It catalyses the reaction an organic molecule + reduced [NADPH--hemoprotein reductase] + O2 = an alcohol + oxidized [NADPH--hemoprotein reductase] + H2O + H(+). Cytochromes P450 are a group of heme-thiolate monooxygenases. In liver microsomes, this enzyme is involved in an NADPH-dependent electron transport pathway. It oxidizes a variety of structurally unrelated compounds, including steroids, fatty acids, and xenobiotics. This Rattus norvegicus (Rat) protein is Cytochrome P450 2B2 (Cyp2b2).